Here is a 115-residue protein sequence, read N- to C-terminus: uncharacterized protein (115 aa).

This is an uncharacterized protein from Spirochaeta aurantia.